The chain runs to 207 residues: Large ribosomal subunit protein uL4 (207 aa).

A disordered region spans residues 47-78 (GTHKVKNRSEVRGGGRKPWRQKGTGRARQGSI). A compositionally biased stretch (basic residues) spans 60–71 (GGRKPWRQKGTG).

This sequence belongs to the universal ribosomal protein uL4 family. As to quaternary structure, part of the 50S ribosomal subunit.

Its function is as follows. One of the primary rRNA binding proteins, this protein initially binds near the 5'-end of the 23S rRNA. It is important during the early stages of 50S assembly. It makes multiple contacts with different domains of the 23S rRNA in the assembled 50S subunit and ribosome. Functionally, forms part of the polypeptide exit tunnel. The chain is Large ribosomal subunit protein uL4 from Listeria innocua serovar 6a (strain ATCC BAA-680 / CLIP 11262).